We begin with the raw amino-acid sequence, 408 residues long: MSPCENDTPINWKRNLIVAWLGCFLTGAAFSLVMPFLPLYVEQLGVTGHSALNMWSGIVFSITFLFSAIASPFWGGLADRKGRKLMLLRSALGMGIVMVLMGLAQNIWQFLILRALLGLLGGFVPNANALIATQVPRNKSGWALGTLSTGGVSGALLGPMAGGLLADSYGLRPVFFITASVLILCFFVTLFCIREKFQPVSKKEMLHMREVVTSLKNPKLILSLFVTTLIIQVATGSIAPILTLYVRELAGNVSNVAFISGMIASVPGVAALLSAPRLGKLGDRIGPEKILITALIFSVLLLIPMSYVQTPLQLGILRFLLGAADGALLPAVQTLLVYNSSNQIAGRIFSYNQSFRDIGNVTGPLMGAAISANYGFRAVFLVTAGVVLFNAVYSWNSLRRRRIPQVSN.

10 helical membrane passes run 16 to 36, 58 to 78, 92 to 112, 115 to 135, 146 to 166, 173 to 193, 221 to 241, 256 to 276, 290 to 310, and 378 to 398; these read LIVA…VMPF, IVFS…GGLA, LGMG…QFLI, ALLG…ATQV, TLST…GLLA, PVFF…LFCI, ILSL…IAPI, VAFI…LSAP, ILIT…YVQT, and AVFL…WNSL.

It belongs to the major facilitator superfamily. DHA1 family. MdtG (TC 2.A.1.2.20) subfamily.

The protein localises to the cell inner membrane. Functionally, confers resistance to fosfomycin and deoxycholate. The chain is Multidrug resistance protein MdtG from Escherichia coli (strain SMS-3-5 / SECEC).